The chain runs to 507 residues: ATP synthase subunit alpha (507 aa).

171–178 (GDRQTGKT) is an ATP binding site.

It belongs to the ATPase alpha/beta chains family. As to quaternary structure, F-type ATPases have 2 components, CF(1) - the catalytic core - and CF(0) - the membrane proton channel. CF(1) has five subunits: alpha(3), beta(3), gamma(1), delta(1), epsilon(1). CF(0) has three main subunits: a(1), b(2) and c(9-12). The alpha and beta chains form an alternating ring which encloses part of the gamma chain. CF(1) is attached to CF(0) by a central stalk formed by the gamma and epsilon chains, while a peripheral stalk is formed by the delta and b chains.

Its subcellular location is the cell inner membrane. It catalyses the reaction ATP + H2O + 4 H(+)(in) = ADP + phosphate + 5 H(+)(out). Its function is as follows. Produces ATP from ADP in the presence of a proton gradient across the membrane. The alpha chain is a regulatory subunit. This Bdellovibrio bacteriovorus (strain ATCC 15356 / DSM 50701 / NCIMB 9529 / HD100) protein is ATP synthase subunit alpha.